The chain runs to 156 residues: Arginine repressor (156 aa).

The protein belongs to the ArgR family.

It localises to the cytoplasm. The protein operates within amino-acid biosynthesis; L-arginine biosynthesis [regulation]. Regulates arginine biosynthesis genes. The polypeptide is Arginine repressor (Vibrio cholerae serotype O1 (strain ATCC 39315 / El Tor Inaba N16961)).